The sequence spans 503 residues: GMP synthase [glutamine-hydrolyzing] (503 aa).

The Glutamine amidotransferase type-1 domain occupies 1–189; it reads MVLVLDFGSQ…FLELAGAKRD (189 aa). C78 (nucleophile) is an active-site residue. Residues H164 and E166 contribute to the active site. One can recognise a GMPS ATP-PPase domain in the interval 190–378; sequence WTPEHVLEEL…LGLPDTLRLR (189 aa). Residue 217-223 participates in ATP binding; that stretch reads SGGVDSS.

In terms of assembly, homodimer.

It carries out the reaction XMP + L-glutamine + ATP + H2O = GMP + L-glutamate + AMP + diphosphate + 2 H(+). The protein operates within purine metabolism; GMP biosynthesis; GMP from XMP (L-Gln route): step 1/1. In terms of biological role, catalyzes the synthesis of GMP from XMP. This chain is GMP synthase [glutamine-hydrolyzing], found in Thermus thermophilus (strain ATCC BAA-163 / DSM 7039 / HB27).